Consider the following 290-residue polypeptide: Triplex capsid protein 1 (290 aa).

Belongs to the herpesviridae TRX1 protein family. As to quaternary structure, interacts with TRX2, MCP and capsid vertex component 2/CVC2.

It is found in the virion. It localises to the host nucleus. In terms of biological role, structural component of the T=16 icosahedral capsid. The capsid is composed of pentamers and hexamers of major capsid protein/MCP, which are linked together by heterotrimers called triplexes. These triplexes are formed by a single molecule of triplex protein 1/TRX1 and two copies of triplex protein 2/TRX2. Additionally, TRX1 is required for efficient transport of TRX2 to the nucleus, which is the site of capsid assembly. In Human cytomegalovirus (strain AD169) (HHV-5), this protein is Triplex capsid protein 1.